We begin with the raw amino-acid sequence, 483 residues long: Glutamyl-tRNA(Gln) amidotransferase subunit A (483 aa).

Residues K76 and S151 each act as charge relay system in the active site. S175 serves as the catalytic Acyl-ester intermediate.

The protein belongs to the amidase family. GatA subfamily. In terms of assembly, heterotrimer of A, B and C subunits.

The catalysed reaction is L-glutamyl-tRNA(Gln) + L-glutamine + ATP + H2O = L-glutaminyl-tRNA(Gln) + L-glutamate + ADP + phosphate + H(+). In terms of biological role, allows the formation of correctly charged Gln-tRNA(Gln) through the transamidation of misacylated Glu-tRNA(Gln) in organisms which lack glutaminyl-tRNA synthetase. The reaction takes place in the presence of glutamine and ATP through an activated gamma-phospho-Glu-tRNA(Gln). This chain is Glutamyl-tRNA(Gln) amidotransferase subunit A, found in Azotobacter vinelandii (strain DJ / ATCC BAA-1303).